We begin with the raw amino-acid sequence, 717 residues long: MSSAPPPGGTPSPPPQPLPIPPPPQPLPVTPPPPPTALPPALPPPPPPTALPPALPPPPPPTTVPPIPPSTPSPPPPLTPSPLPPSPTTPSPPLTPSPTTPSPPLTPSPPPAITPSPPLTPSPLPPSPTTPSPPPPSPSIPSPPLTPSPPPSSPLRPSSPPPPSPATPSTPPRSPPPPSTPTPPPRVGSLSPPPPASPSGGRSPSTPSTTPGSSPPAQSSKELSKGAMVGIAIGGGFVLLVALALIFFLCKKKRRRDNEAPPAPIDGVPYGGQQQQNASRRSDHVVMSVPPPKSPSSAPPRPPHFMSSGSSGDYDSNYSDQSVLPPPSPGLALGLGIYQGTFNYEELSRATNGFSEANLLGQGGFGYVFKGMLRNGKEVAVKQLKEGSSQGEREFQAEVGIISRVHHRHLVALVGYCIADAQRLLVYEFVPNNTLEFHLHGKGRPTMEWSSRLKIAVGSAKGLSYLHENCNPKIIHRDIKASNILIDFKFEAKVADFGLAKIASDTNTHVSTRVMGTFGYLAPEYASSGKLTEKSDVFSFGVVLLELITGRRPIDVNNVHADNSLVDWARPLLNQVSELGNFEVVVDKKLNNEYDKEEMARMVACAAACVRSTAPRRPRMDQVARVLEGNISPSDLNQGITPGHSNVYGSSGGSTDYDSSQDNEGMNKFRKVGLETQDLYSNPISEYDLYPSWSSTDGQTTQGKATGNIKRPGQGYG.

A compositionally biased stretch (pro residues) spans 1-197; it reads MSSAPPPGGT…GSLSPPPPAS (197 aa). A disordered region spans residues 1–221; that stretch reads MSSAPPPGGT…GSSPPAQSSK (221 aa). At 1 to 228 the chain is on the extracellular side; that stretch reads MSSAPPPGGT…SSKELSKGAM (228 aa). A compositionally biased stretch (low complexity) spans 198-220; sequence PSGGRSPSTPSTTPGSSPPAQSS. The helical transmembrane segment at 229-249 threads the bilayer; it reads VGIAIGGGFVLLVALALIFFL. Residues 250–717 are Cytoplasmic-facing; that stretch reads CKKKRRRDNE…NIKRPGQGYG (468 aa). Positions 258 to 323 are disordered; the sequence is NEAPPAPIDG…YDSNYSDQSV (66 aa). Residues 289–303 show a composition bias toward pro residues; that stretch reads VPPPKSPSSAPPRPP. Residues 307–322 show a composition bias toward low complexity; the sequence is SSGSSGDYDSNYSDQS. Residues 354 to 631 form the Protein kinase domain; the sequence is FSEANLLGQG…QVARVLEGNI (278 aa). ATP-binding positions include 360–368 and Lys-382; that span reads LGQGGFGYV. Residue Asp-478 is the Proton acceptor of the active site. Composition is skewed to polar residues over residues 632–644 and 692–705; these read SPSDLNQGITPGH and SWSSTDGQTTQGKA. Disordered regions lie at residues 632-665 and 690-717; these read SPSDLNQGITPGHSNVYGSSGGSTDYDSSQDNEG and YPSWSSTDGQTTQGKATGNIKRPGQGYG.

The protein belongs to the protein kinase superfamily. Ser/Thr protein kinase family. In terms of tissue distribution, mostly expressed in inflorescence bolt, flower buds and siliques, and, to a lower extent, in roots, seedlings and leaves.

It localises to the cell membrane. It catalyses the reaction L-seryl-[protein] + ATP = O-phospho-L-seryl-[protein] + ADP + H(+). The catalysed reaction is L-threonyl-[protein] + ATP = O-phospho-L-threonyl-[protein] + ADP + H(+). This is Proline-rich receptor-like protein kinase PERK2 (PERK2) from Arabidopsis thaliana (Mouse-ear cress).